Here is a 134-residue protein sequence, read N- to C-terminus: Large-conductance mechanosensitive channel (134 aa).

2 helical membrane-spanning segments follow: residues 16–36 (VIDL…VTAL) and 81–101 (GDFI…FIVV).

Belongs to the MscL family. Homopentamer.

It localises to the cell inner membrane. Channel that opens in response to stretch forces in the membrane lipid bilayer. May participate in the regulation of osmotic pressure changes within the cell. This Stenotrophomonas maltophilia (strain K279a) protein is Large-conductance mechanosensitive channel.